A 259-amino-acid chain; its full sequence is Ribosomal RNA small subunit methyltransferase A (259 aa).

Positions 12, 14, 39, 60, 84, and 102 each coordinate S-adenosyl-L-methionine.

The protein belongs to the class I-like SAM-binding methyltransferase superfamily. rRNA adenine N(6)-methyltransferase family. RsmA subfamily.

Its subcellular location is the cytoplasm. It catalyses the reaction adenosine(1518)/adenosine(1519) in 16S rRNA + 4 S-adenosyl-L-methionine = N(6)-dimethyladenosine(1518)/N(6)-dimethyladenosine(1519) in 16S rRNA + 4 S-adenosyl-L-homocysteine + 4 H(+). Specifically dimethylates two adjacent adenosines (A1518 and A1519) in the loop of a conserved hairpin near the 3'-end of 16S rRNA in the 30S particle. May play a critical role in biogenesis of 30S subunits. This chain is Ribosomal RNA small subunit methyltransferase A, found in Nitrosospira multiformis (strain ATCC 25196 / NCIMB 11849 / C 71).